Reading from the N-terminus, the 291-residue chain is Lectin (291 aa).

Positions 1 to 28 (MGISKKSQLVPLLAFITMFLMVVSRVSS) are cleaved as a signal peptide. D118 contributes to the Ca(2+) binding site. Residue R138 coordinates a carbohydrate. A propeptide spans 147–162 (NIIKNSTNLDFNAAYN) (removed in mature form). E170 and D172 together coordinate Mn(2+). D172, Y174, N176, and D181 together coordinate Ca(2+). Y174 contacts a carbohydrate. D181 and H186 together coordinate Mn(2+). Ca(2+) is bound at residue K208. A carbohydrate is bound at residue S228. Positions 281–291 (QLQDLRIASVV) are cleaved as a propeptide — removed in mature form.

It belongs to the leguminous lectin family. The mature chain consists of residues 163-280 followed by residues 29-147. Concanavalin A-like lectins of the Diocleinae subtribe undergo proteolytic processing referred to as circular permutation. The propeptide is split into an N-terminal and a C-terminal part, the gamma and beta chain, respectively. These are then religated in beta-gamma order to form the mature alpha chain. The beta and gamma chains can often be detected in cell extracts.

In terms of biological role, D-mannose-binding lectin that also binds alpha-methyl-D-mannoside with even higher affinity. Has hemagglutinating activity against rabbit erythrocytes. Shows toxicity against the brine shrimp A.nauplii. Induces reversible paw edema and hypernociceptivity in rats. This Dioclea lasiophylla protein is Lectin.